The primary structure comprises 443 residues: Glutamate--tRNA ligase 1 (443 aa).

Residues 9 to 19 (PSPTGYLHVGN) carry the 'HIGH' region motif. A 'KMSKS' region motif is present at residues 238–242 (KISKR). Lysine 241 contributes to the ATP binding site.

This sequence belongs to the class-I aminoacyl-tRNA synthetase family. Glutamate--tRNA ligase type 1 subfamily. As to quaternary structure, monomer.

The protein resides in the cytoplasm. It carries out the reaction tRNA(Glu) + L-glutamate + ATP = L-glutamyl-tRNA(Glu) + AMP + diphosphate. Catalyzes the attachment of glutamate to tRNA(Glu) in a two-step reaction: glutamate is first activated by ATP to form Glu-AMP and then transferred to the acceptor end of tRNA(Glu). The protein is Glutamate--tRNA ligase 1 of Ehrlichia ruminantium (strain Welgevonden).